Here is a 745-residue protein sequence, read N- to C-terminus: Receptor-type adenylate cyclase (745 aa).

At 1–341 (GELGQTDRFF…NEGALTRAQL (341 aa)) the chain is on the extracellular side. Residues asparagine 15, asparagine 50, asparagine 189, and asparagine 312 are each glycosylated (N-linked (GlcNAc...) asparagine). A helical transmembrane segment spans residues 342–362 (IGVVVGTIFAVLLLLALGIVL). The Cytoplasmic portion of the chain corresponds to 363 to 745 (CVALRNTRDN…GSDEVARTCV (383 aa)). Residues 384 to 538 (TLIFTDIESS…RTPNLAARTE (155 aa)) enclose the Guanylate cyclase domain. Residues aspartate 389 and aspartate 432 each contribute to the Mg(2+) site.

This sequence belongs to the adenylyl cyclase class-3 family. It depends on Mg(2+) as a cofactor.

Its subcellular location is the cell membrane. It catalyses the reaction ATP = 3',5'-cyclic AMP + diphosphate. Could act as a receptor for an unknown ligand. This Trypanosoma congolense protein is Receptor-type adenylate cyclase.